The following is a 135-amino-acid chain: Large ribosomal subunit protein mL54 (135 aa).

The protein belongs to the mitochondrion-specific ribosomal protein mL54 family. Component of the mitochondrial ribosome large subunit (39S) which comprises a 16S rRNA and about 50 distinct proteins.

It is found in the mitochondrion. This chain is Large ribosomal subunit protein mL54 (mrpl54), found in Danio rerio (Zebrafish).